The chain runs to 351 residues: Heat-inducible transcription repressor HrcA (351 aa).

Belongs to the HrcA family.

In terms of biological role, negative regulator of class I heat shock genes (grpE-dnaK-dnaJ and groELS operons). Prevents heat-shock induction of these operons. This is Heat-inducible transcription repressor HrcA from Clostridium tetani (strain Massachusetts / E88).